A 699-amino-acid polypeptide reads, in one-letter code: Sarcoplasmic reticulum histidine-rich calcium-binding protein (699 aa).

The signal sequence occupies residues 1–28 (MGHHRPWLHASVLWAGVASLLLPPAMTQ). The tract at residues 50–95 (SEEASAELRHHLHSPRDHPDENKDVSTENGHHFWSHPDREKEDEDV) is disordered. Basic and acidic residues predominate over residues 55–89 (AELRHHLHSPRDHPDENKDVSTENGHHFWSHPDRE). Thr-76 carries the post-translational modification Phosphothreonine; by FAM20C. A run of 10 repeats spans residues 106–121 (HRSQ…VSGE), 134–154 (HRGH…HLPS), 155–177 (HRSH…HHHI), 180–213 (HGHR…GHQA), 214–237 (HRHR…HGPS), 238–270 (HRHQ…RHQA), 271–294 (HRHQ…RDPS), 295–318 (HRHR…GHQA), 319–342 (HRHQ…HVPD), and 343–365 (HRHQ…WHQG). Residues 106–342 (HRSQDHKVGD…SGEHHHHVPD (237 aa)) are 6 X approximate tandem repeats. Positions 106–365 (HRSQDHKVGD…DVSTERWHQG (260 aa)) are 4 X tandem repeats, acidic. Residues Ser-119 and Ser-145 each carry the phosphoserine; by FAM20C modification. The tract at residues 127 to 617 (HGGQARGHRG…EDTGPQDAQE (491 aa)) is disordered. Basic residues-rich tracts occupy residues 148 to 158 (HRHHLPSHRSH) and 173 to 183 (HHHHILRHGHR). Acidic residues predominate over residues 187–206 (GEDDEGEEEEEEEEEEEEAS). The segment covering 231–241 (HHHHGPSHRHQ) has biased composition (basic residues). Over residues 244–263 (EEDDDDDDDDDDDDDDDDVS) the composition is skewed to acidic residues. A compositionally biased stretch (basic residues) spans 288–298 (HHHRDPSHRHR). A compositionally biased stretch (acidic residues) spans 302–311 (EDDNDDDDVS). Positions 324–335 (HRKEEVEAVSGE) are enriched in basic and acidic residues. Ser-333 is modified (phosphoserine). The span at 336 to 347 (HHHHVPDHRHQG) shows a compositional bias: basic residues. A phosphoserine; by FAM20C mark is found at Ser-358 and Ser-431. Basic and acidic residues-rich tracts occupy residues 444 to 463 (SHQD…EMSH) and 470 to 481 (VVKDRSHLRKDD). Position 494 is a phosphoserine; by FAM20C (Ser-494). Basic and acidic residues predominate over residues 504–515 (QGEKGTHHGSRD). Acidic residues-rich tracts occupy residues 532 to 551 (QEEE…DEER) and 567 to 581 (SEEE…EEDE). Ser-567 carries the post-translational modification Phosphoserine; by FAM20C. Residues 627 to 673 (CGYCSFCNRCTECESCHCDEENMGEHCDQCQHCQFCYLCPLVCETVC) are metal-binding.

It belongs to the HRC family.

It is found in the sarcoplasmic reticulum lumen. In terms of biological role, may play a role in the regulation of calcium sequestration or release in the SR of skeletal and cardiac muscle. In Homo sapiens (Human), this protein is Sarcoplasmic reticulum histidine-rich calcium-binding protein (HRC).